We begin with the raw amino-acid sequence, 492 residues long: Glutamyl-tRNA(Gln) amidotransferase subunit A (492 aa).

Residues K79 and S154 each act as charge relay system in the active site. The Acyl-ester intermediate role is filled by S178.

Belongs to the amidase family. GatA subfamily. Heterotrimer of A, B and C subunits.

The catalysed reaction is L-glutamyl-tRNA(Gln) + L-glutamine + ATP + H2O = L-glutaminyl-tRNA(Gln) + L-glutamate + ADP + phosphate + H(+). Its function is as follows. Allows the formation of correctly charged Gln-tRNA(Gln) through the transamidation of misacylated Glu-tRNA(Gln) in organisms which lack glutaminyl-tRNA synthetase. The reaction takes place in the presence of glutamine and ATP through an activated gamma-phospho-Glu-tRNA(Gln). The chain is Glutamyl-tRNA(Gln) amidotransferase subunit A from Desulforudis audaxviator (strain MP104C).